Here is a 397-residue protein sequence, read N- to C-terminus: Probable peptidoglycan glycosyltransferase FtsW (397 aa).

Residues 1–26 (MSPRNSALERFRQHQKIPEKRWQRLA) are Cytoplasmic-facing. The helical transmembrane segment at 27–47 (FPDVGLLLCWLALIVIGMVMV) threads the bilayer. Over 48 to 69 (TSSSLSEAHVERLSTHHFAIRQ) the chain is Periplasmic. A helical transmembrane segment spans residues 70–90 (GIFYVGSSIFAYIAFMLGTNF). Topologically, residues 91–96 (YREKAK) are cytoplasmic. Residues 97–117 (FILGLAFLGLLLVYAPGIGVV) traverse the membrane as a helical segment. The Periplasmic portion of the chain corresponds to 118–126 (VNGSRRWLN). The chain crosses the membrane as a helical span at residues 127-147 (LGVINLQVGEFAKLAVFIFTA). The Cytoplasmic portion of the chain corresponds to 148-159 (AYLQHHTQRLDH). The helical transmembrane segment at 160–180 (SWQPIIGLLAVTACFALMFYL) threads the bilayer. The Periplasmic portion of the chain corresponds to 181–185 (QPDFG). Residues 186 to 206 (TMVVIVATVLGMLFLSGVSIW) form a helical membrane-spanning segment. A topological domain (cytoplasmic) is located at residue R207. A helical membrane pass occupies residues 208-228 (LLLLGVLIAPAMVWVLISESY). The Periplasmic portion of the chain corresponds to 229-294 (RLRRLTTFIN…IFSIIAEETG (66 aa)). The chain crosses the membrane as a helical span at residues 295–315 (LVGALIVMAILMILVWRAFAI). Residues 316 to 328 (GYLADRMRKRFSS) are Cytoplasmic-facing. Residues 329–349 (LLAYGIGLWLGLQSLINIGVT) form a helical membrane-spanning segment. Residues 350–359 (TGALPTKGLT) are Periplasmic-facing. Residues 360–380 (LPLISYGGSSILMTSIALAIL) traverse the membrane as a helical segment. At 381–397 (ARIDAESRFIARLEGKI) the chain is on the cytoplasmic side.

The protein belongs to the SEDS family. FtsW subfamily.

The protein resides in the cell inner membrane. The catalysed reaction is [GlcNAc-(1-&gt;4)-Mur2Ac(oyl-L-Ala-gamma-D-Glu-L-Lys-D-Ala-D-Ala)](n)-di-trans,octa-cis-undecaprenyl diphosphate + beta-D-GlcNAc-(1-&gt;4)-Mur2Ac(oyl-L-Ala-gamma-D-Glu-L-Lys-D-Ala-D-Ala)-di-trans,octa-cis-undecaprenyl diphosphate = [GlcNAc-(1-&gt;4)-Mur2Ac(oyl-L-Ala-gamma-D-Glu-L-Lys-D-Ala-D-Ala)](n+1)-di-trans,octa-cis-undecaprenyl diphosphate + di-trans,octa-cis-undecaprenyl diphosphate + H(+). It participates in cell wall biogenesis; peptidoglycan biosynthesis. Its function is as follows. Peptidoglycan polymerase that is essential for cell division. In Dichelobacter nodosus (strain VCS1703A), this protein is Probable peptidoglycan glycosyltransferase FtsW.